Reading from the N-terminus, the 73-residue chain is Large ribosomal subunit protein bL31c (73 aa).

It belongs to the bacterial ribosomal protein bL31 family. Type A subfamily. As to quaternary structure, part of the 50S ribosomal subunit.

Its subcellular location is the plastid. The protein localises to the chloroplast. In terms of biological role, binds the 23S rRNA. This chain is Large ribosomal subunit protein bL31c, found in Palmaria palmata (Dulse).